Consider the following 187-residue polypeptide: Protein P18, mitochondrial (187 aa).

The transit peptide at 1-17 (MRRLSSQLMCTAAAVRF) directs the protein to the mitochondrion. Positions 160–187 (NAAKAKADGKEHPSTLAQQQSLFDIKIQ) are disordered.

The protein localises to the mitochondrion inner membrane. Its function is as follows. Putative RNA-binding protein. The protein is Protein P18, mitochondrial of Leishmania tarentolae (Sauroleishmania tarentolae).